Consider the following 65-residue polypeptide: Large ribosomal subunit protein bL35 (65 aa).

The protein belongs to the bacterial ribosomal protein bL35 family.

The polypeptide is Large ribosomal subunit protein bL35 (Prochlorococcus marinus subsp. pastoris (strain CCMP1986 / NIES-2087 / MED4)).